The following is a 619-amino-acid chain: 1-deoxy-D-xylulose-5-phosphate synthase (619 aa).

Thiamine diphosphate is bound by residues His-74 and 115-117; that span reads GHS. Asp-146 lines the Mg(2+) pocket. Residues 147-148, Asn-175, and Tyr-285 contribute to the thiamine diphosphate site; that span reads GA. Asn-175 lines the Mg(2+) pocket. The segment at 289–310 is disordered; the sequence is EKSPSKYHGIPPSNDKKEEPNK. Glu-365 contributes to the thiamine diphosphate binding site.

The protein belongs to the transketolase family. DXPS subfamily. As to quaternary structure, homodimer. Mg(2+) serves as cofactor. The cofactor is thiamine diphosphate.

The enzyme catalyses D-glyceraldehyde 3-phosphate + pyruvate + H(+) = 1-deoxy-D-xylulose 5-phosphate + CO2. Its pathway is metabolic intermediate biosynthesis; 1-deoxy-D-xylulose 5-phosphate biosynthesis; 1-deoxy-D-xylulose 5-phosphate from D-glyceraldehyde 3-phosphate and pyruvate: step 1/1. Functionally, catalyzes the acyloin condensation reaction between C atoms 2 and 3 of pyruvate and glyceraldehyde 3-phosphate to yield 1-deoxy-D-xylulose-5-phosphate (DXP). This chain is 1-deoxy-D-xylulose-5-phosphate synthase, found in Clostridium botulinum (strain Alaska E43 / Type E3).